A 687-amino-acid chain; its full sequence is Dictomallein (687 aa).

Disordered stretches follow at residues 1-45 and 73-112; these read MGNG…SRRL and TAGG…STSA. In terms of domain architecture, Peptidase M66 spans 233–501; sequence PVFGTDADVQ…QAWIASRVLA (269 aa). A Zn(2+)-binding site is contributed by His393. The active site involves Glu394. Zn(2+) is bound by residues His397 and His403.

The protein belongs to the dictomallein family. The cofactor is Zn(2+).

The chain is Dictomallein (dtmL) from Burkholderia mallei (strain NCTC 10247).